Reading from the N-terminus, the 1238-residue chain is Inner capsid protein VP2 (1238 aa).

The interval 1–35 is disordered; that stretch reads MSTSAKKTPESKTEDKIEPVIEQTSNDKPEPPPNK. The segment covering 7–30 has biased composition (basic and acidic residues); sequence KTPESKTEDKIEPVIEQTSNDKPE.

This sequence belongs to the turreted BTV-fold inner capsid family. As to quaternary structure, homodecamer; each decamer is made up of two conformers of VP2, called VP2A and VP2B. 12 homodecamers assemble to form an icosahedral capsid.

It is found in the virion. Inner capsid protein that self-assembles to form an icosahedral capsid with a T=2 symmetry, which consists of 120 copies of VP2, with channels at each of its five-fold vertices. This capsid constitutes the innermost concentric layer of the viral mature particle. The polypeptide is Inner capsid protein VP2 (S2) (Cryphonectria parasitica (Chestnut blight fungus)).